The chain runs to 202 residues: uncharacterized protein (202 aa).

This is an uncharacterized protein from Saccharomyces cerevisiae (strain ATCC 204508 / S288c) (Baker's yeast).